Reading from the N-terminus, the 480-residue chain is Argininosuccinate lyase (480 aa).

The interval 1–20 (MTQQDGGQAGQAEPTKLWGG) is disordered.

This sequence belongs to the lyase 1 family. Argininosuccinate lyase subfamily.

The protein resides in the cytoplasm. It carries out the reaction 2-(N(omega)-L-arginino)succinate = fumarate + L-arginine. It functions in the pathway amino-acid biosynthesis; L-arginine biosynthesis; L-arginine from L-ornithine and carbamoyl phosphate: step 3/3. The sequence is that of Argininosuccinate lyase from Saccharopolyspora erythraea (strain ATCC 11635 / DSM 40517 / JCM 4748 / NBRC 13426 / NCIMB 8594 / NRRL 2338).